The primary structure comprises 351 residues: Molybdate-binding protein MolA (351 aa).

Residues 1-21 (MKLKSLLIACLLSSLSFSALA) form the signal peptide. The region spanning 41-322 (RAVVLQHQTL…WLAKALYPQR (282 aa)) is the Fe/B12 periplasmic-binding domain. Molybdate-binding positions include 47–48 (HQ), tyrosine 217, arginine 264, and 300–301 (GY).

It belongs to the bacterial solute-binding protein 8 family. In terms of assembly, the complex is composed of two ATP-binding proteins (MolC), two transmembrane proteins (MolB) and a solute-binding protein (MolA).

It is found in the periplasm. Its activity is regulated as follows. The MolBCA complex shows a decrease in affinity in the presence of increasing concentrations of substrate and nucleotide. Its function is as follows. Part of the ABC transporter complex MolBCA involved in molybdate import. Functions as a low-affinity molybdate transporter. Binds to both molybdate and tungstate, but not to sulfate or phosphate. This Haemophilus influenzae (strain ATCC 51907 / DSM 11121 / KW20 / Rd) protein is Molybdate-binding protein MolA.